Here is a 492-residue protein sequence, read N- to C-terminus: Catalase (492 aa).

Active-site residues include histidine 65 and asparagine 138. Residue tyrosine 348 participates in heme binding.

The protein belongs to the catalase family. As to quaternary structure, homotetramer. Requires heme as cofactor. As to expression, in stems, leaves, roots and developing fruits.

The protein resides in the cytoplasm. Its subcellular location is the cytosol. The protein localises to the peroxisome matrix. It catalyses the reaction 2 H2O2 = O2 + 2 H2O. Its function is as follows. Catalyzes the degradation of hydrogen peroxide (H(2)O(2)) generated by peroxisomal oxidases to water and oxygen, thereby protecting cells from the toxic effects of hydrogen peroxide. The polypeptide is Catalase (CAT) (Capsicum annuum (Capsicum pepper)).